Here is a 249-residue protein sequence, read N- to C-terminus: Derlin-2.1 (249 aa).

The Cytoplasmic portion of the chain corresponds to 1-21 (MAQAVEEWYRQMPIITRSYLT). Residues 22 to 42 (AAVVTTVGCTLEIISPYHLYL) form a helical membrane-spanning segment. At 43-96 (NPKLVVQHYEIWRLVTNFLYFRKMDLDFLFHMFFLARYCKLLEENSFRGRTADF) the chain is on the lumenal side. The helical transmembrane segment at 97-117 (FYMLLFGATVLTSIVLIGGMI) threads the bilayer. Residues 118 to 122 (PYISE) are Cytoplasmic-facing. Residues 123–143 (TFARILFLSNSLTFMMVYVWS) form a helical membrane-spanning segment. Residues 144–152 (KHNPFIHMS) are Lumenal-facing. The helical transmembrane segment at 153 to 173 (FLGLFTFTAAYLPWVLLGFSI) threads the bilayer. The Cytoplasmic portion of the chain corresponds to 174-249 (LVGSSTWVDL…GAMGLDPQAQ (76 aa)).

It belongs to the derlin family. As to expression, expressed in roots, stalks, leaves, embryo and endosperm.

It is found in the endoplasmic reticulum membrane. Functionally, may be involved in the degradation process of specific misfolded endoplasmic reticulum (ER) luminal proteins. The sequence is that of Derlin-2.1 (DER2.1) from Zea mays (Maize).